Consider the following 501-residue polypeptide: Nuclear receptor-binding protein 2 (501 aa).

A disordered region spans residues 1–33 (MAAPEPAPRRAREREREREDESEDESDILEESP). The segment covering 7-19 (APRRARERERERE) has biased composition (basic and acidic residues). Positions 20 to 30 (DESEDESDILE) are enriched in acidic residues. A Protein kinase domain is found at 38-306 (QKRREQVNQG…AHSLLFHRVL (269 aa)). Thr-409 and Thr-411 each carry phosphothreonine.

This sequence belongs to the protein kinase superfamily. Ser/Thr protein kinase family.

It is found in the cytoplasm. Functionally, may regulate apoptosis of neural progenitor cells during their differentiation. This Homo sapiens (Human) protein is Nuclear receptor-binding protein 2.